The following is a 738-amino-acid chain: Probable trehalase (738 aa).

A disordered region spans residues 1 to 44; sequence MLQGMPKRSGSISELHDPFSSPDVYYGPATDPRRQKQPNKYSRT. Substrate is bound by residues Arg-289, 296–297, Asn-333, Arg-342, 342–344, and Gly-463; these read WD and RSQ. Residues Asp-465 and Glu-660 each act as proton donor/acceptor in the active site.

Belongs to the glycosyl hydrolase 37 family.

The enzyme catalyses alpha,alpha-trehalose + H2O = alpha-D-glucose + beta-D-glucose. The sequence is that of Probable trehalase (NTH2) from Eremothecium gossypii (strain ATCC 10895 / CBS 109.51 / FGSC 9923 / NRRL Y-1056) (Yeast).